Here is a 459-residue protein sequence, read N- to C-terminus: FAD-dependent monooxygenase CTB5 (459 aa).

The FAD-binding PCMH-type domain maps to 10–187; the sequence is SDLHPSCIAL…TAVTLKAFEQ (178 aa).

The protein belongs to the oxygen-dependent FAD-linked oxidoreductase family.

It participates in mycotoxin biosynthesis. FAD-dependent monooxygenase; part of the gene cluster that mediates the biosynthesis of cercosporin, a light-activated, non-host-selective toxin. The perylenequinone chromophore of cercosporin absorbs light energy to attain an electronically-activated triplet state and produces active oxygen species such as the hydroxyl radical, superoxide, hydrogen peroxide or singlet oxygen upon reaction with oxygen molecules. These reactive oxygen species cause damage to various cellular components including lipids, proteins and nucleic acids. The first step of cercosporin biosynthesis is performed by the polyketide synthase CTB1 which catalyzes the formation of nor-toralactone. The starter unit acyltransferase (SAT) domain of CTB1 initiates polyketide extension by the selective utilization of acetyl-CoA, which is elongated to the heptaketide in the beta-ketoacyl synthase (KS) domain by successive condensations with six malonyl units introduced by the malonyl acyltransferase (MAT) domain. The product template (PT) domain catalyzes C4-C9 and C2-C11 aldol cyclizations and dehydrations to a trihydroxynaphthalene, which is thought to be delivered to the thioesterase (TE) domain for product release. The bifunctional enzyme CTB3 then methylates nor-toralactone to toralactone before conducting an unusual oxidative aromatic ring opening. The O-methyltransferase CTB2 further methylates the nascent OH-6 of the CBT3 product, blocking further oxidation at this site before the reductase CTB6 reduces the 2-oxopropyl ketone at position C7, giving naphthalene. The FAD-dependent monooxygenase CTB5 in concert with the multicopper oxidase CTB12 are responsible for homodimerization of naphthalene with CTB7 installing the dioxepine moiety, finally producing cercosporin. The fasciclin domain-containing protein CTB11 might act with CTB5 and CTB12 whereas the roles of CTB9 and CTB10 have still to be elucidated. In Cercospora nicotianae (Barn spot disease fungus), this protein is FAD-dependent monooxygenase CTB5.